The following is a 274-amino-acid chain: NADPH-dependent 7-cyano-7-deazaguanine reductase (274 aa).

V80 to S82 is a substrate binding site. S82–K83 lines the NADPH pocket. The active-site Thioimide intermediate is the C181. D188 serves as the catalytic Proton donor. Residue H220–E221 participates in substrate binding. R249–G250 contacts NADPH.

Belongs to the GTP cyclohydrolase I family. QueF type 2 subfamily. In terms of assembly, homodimer.

The protein localises to the cytoplasm. It catalyses the reaction 7-aminomethyl-7-carbaguanine + 2 NADP(+) = 7-cyano-7-deazaguanine + 2 NADPH + 3 H(+). The protein operates within tRNA modification; tRNA-queuosine biosynthesis. In terms of biological role, catalyzes the NADPH-dependent reduction of 7-cyano-7-deazaguanine (preQ0) to 7-aminomethyl-7-deazaguanine (preQ1). In Paraburkholderia phymatum (strain DSM 17167 / CIP 108236 / LMG 21445 / STM815) (Burkholderia phymatum), this protein is NADPH-dependent 7-cyano-7-deazaguanine reductase.